The chain runs to 146 residues: 3-hydroxyacyl-[acyl-carrier-protein] dehydratase FabZ (146 aa).

H49 is a catalytic residue.

This sequence belongs to the thioester dehydratase family. FabZ subfamily.

The protein localises to the cytoplasm. The enzyme catalyses a (3R)-hydroxyacyl-[ACP] = a (2E)-enoyl-[ACP] + H2O. Functionally, involved in unsaturated fatty acids biosynthesis. Catalyzes the dehydration of short chain beta-hydroxyacyl-ACPs and long chain saturated and unsaturated beta-hydroxyacyl-ACPs. The polypeptide is 3-hydroxyacyl-[acyl-carrier-protein] dehydratase FabZ (Ectopseudomonas mendocina (strain ymp) (Pseudomonas mendocina)).